Consider the following 302-residue polypeptide: Lipoyl synthase (302 aa).

[4Fe-4S] cluster contacts are provided by Cys44, Cys49, Cys55, Cys70, Cys74, Cys77, and Ser283. One can recognise a Radical SAM core domain in the interval 56 to 272 (WSKKHATVMI…AKVARSKGFL (217 aa)).

This sequence belongs to the radical SAM superfamily. Lipoyl synthase family. It depends on [4Fe-4S] cluster as a cofactor.

It is found in the cytoplasm. The catalysed reaction is [[Fe-S] cluster scaffold protein carrying a second [4Fe-4S](2+) cluster] + N(6)-octanoyl-L-lysyl-[protein] + 2 oxidized [2Fe-2S]-[ferredoxin] + 2 S-adenosyl-L-methionine + 4 H(+) = [[Fe-S] cluster scaffold protein] + N(6)-[(R)-dihydrolipoyl]-L-lysyl-[protein] + 4 Fe(3+) + 2 hydrogen sulfide + 2 5'-deoxyadenosine + 2 L-methionine + 2 reduced [2Fe-2S]-[ferredoxin]. Its pathway is protein modification; protein lipoylation via endogenous pathway; protein N(6)-(lipoyl)lysine from octanoyl-[acyl-carrier-protein]: step 2/2. Functionally, catalyzes the radical-mediated insertion of two sulfur atoms into the C-6 and C-8 positions of the octanoyl moiety bound to the lipoyl domains of lipoate-dependent enzymes, thereby converting the octanoylated domains into lipoylated derivatives. The polypeptide is Lipoyl synthase (Orientia tsutsugamushi (strain Boryong) (Rickettsia tsutsugamushi)).